We begin with the raw amino-acid sequence, 215 residues long: Ribose-5-phosphate isomerase A (215 aa).

Residues 26–29 (TGST), 79–82 (DGAD), and 92–95 (KGGG) contribute to the substrate site. The active-site Proton acceptor is the Glu101. Lys119 is a binding site for substrate.

Belongs to the ribose 5-phosphate isomerase family. As to quaternary structure, homodimer.

The catalysed reaction is aldehydo-D-ribose 5-phosphate = D-ribulose 5-phosphate. It participates in carbohydrate degradation; pentose phosphate pathway; D-ribose 5-phosphate from D-ribulose 5-phosphate (non-oxidative stage): step 1/1. Catalyzes the reversible conversion of ribose-5-phosphate to ribulose 5-phosphate. The protein is Ribose-5-phosphate isomerase A of Xanthomonas axonopodis pv. citri (strain 306).